The chain runs to 76 residues: Protein CASC2, isoforms 1/2 (76 aa).

The disordered stretch occupies residues 1 to 20; sequence MAGTRGLMLLGPGPVAGPRD.

This Homo sapiens (Human) protein is Protein CASC2, isoforms 1/2 (CASC2).